The sequence spans 165 residues: Growth arrest and DNA damage-inducible protein GADD45 alpha (165 aa).

A Phosphothreonine modification is found at Thr-2.

The protein belongs to the GADD45 family. Interacts with AURKA, GADD45GIP1 and PCNA. Interacts with MAPK14.

The protein localises to the nucleus. In terms of biological role, might affect PCNA interaction with some CDK (cell division protein kinase) complexes; stimulates DNA excision repair in vitro and inhibits entry of cells into S phase. In T-cells, functions as a regulator of p38 MAPKs by inhibiting p88 phosphorylation and activity. The protein is Growth arrest and DNA damage-inducible protein GADD45 alpha (Gadd45a) of Mus musculus (Mouse).